The chain runs to 91 residues: Mercuric transport protein periplasmic component (91 aa).

The signal sequence occupies residues 1–19; that stretch reads MKKLFASLALAAVVAPVWA. The HMA domain occupies 22 to 88; that stretch reads QTVTLSVPGM…ATADAGYPSS (67 aa). 2 residues coordinate Hg(2+): C33 and C36.

The protein belongs to the MerP family. In terms of assembly, monomer.

It localises to the periplasm. Involved in mercury resistance. Acts as a mercury scavenger that specifically binds to a mercuric ion in the periplasm and probably passes it to the cytoplasmic mercuric reductase MerA via the mercuric transport protein MerT. The chain is Mercuric transport protein periplasmic component from Pseudomonas aeruginosa.